The chain runs to 123 residues: Fluoride-specific ion channel FluC 2 (123 aa).

3 consecutive transmembrane segments (helical) span residues 30–50 (FPLP…FVAG), 68–88 (VGFI…VLLL), and 93–113 (WPLA…AVWV). Positions 72 and 75 each coordinate Na(+).

It belongs to the fluoride channel Fluc/FEX (TC 1.A.43) family.

It is found in the cell membrane. It carries out the reaction fluoride(in) = fluoride(out). With respect to regulation, na(+) is not transported, but it plays an essential structural role and its presence is essential for fluoride channel function. Its function is as follows. Fluoride-specific ion channel. Important for reducing fluoride concentration in the cell, thus reducing its toxicity. This chain is Fluoride-specific ion channel FluC 2, found in Symbiobacterium thermophilum (strain DSM 24528 / JCM 14929 / IAM 14863 / T).